The primary structure comprises 522 residues: Proactivator polypeptide-like 1 (522 aa).

Residues 1–17 (MLCALILWSGLLGAARA) form the signal peptide. A propeptide spanning residues 18–59 (SPISVPRECAKGSEVWCQDLQAAAKCRAVRHCQSAVWNKPTV) is cleaved from the precursor. The 41-residue stretch at 19–59 (PISVPRECAKGSEVWCQDLQAAAKCRAVRHCQSAVWNKPTV) folds into the Saposin A-type 1 domain. 4 consecutive Saposin B-type domains span residues 60–144 (KSLP…EPLQ), 183–261 (EGAV…ERES), 291–371 (LGLT…GSKR), and 393–474 (QGSF…HGPK). 3 disulfide bridges follow: Cys64–Cys140, Cys67–Cys134, and Cys95–Cys107. Positions 146 to 183 (HLAETTSERPLTQEDANEVMAPFLSNGALSFHPSQMPE) are excised as a propeptide. Cystine bridges form between Cys187–Cys257, Cys190–Cys251, and Cys216–Cys227. Asn204 carries N-linked (GlcNAc...) asparagine glycosylation. The propeptide occupies 261 to 290 (SAHWLTRVAAVDGVPSLEMEMPRTNELQMQ). Cystine bridges form between Cys295/Cys367, Cys298/Cys361, and Cys326/Cys337. Asn312 carries an N-linked (GlcNAc...) (high mannose) asparagine glycan. Positions 371–392 (RRARSISRAVATTPSLPVDEEN) are excised as a propeptide. Intrachain disulfides connect Cys397–Cys470, Cys400–Cys464, and Cys428–Cys439. Residues 475 to 522 (TPLLGTDQCVMGPSFWCKSPEAAEMCNALEHCQRLVWKKPVSKINEQP) constitute a propeptide that is removed on maturation. Residues 476 to 516 (PLLGTDQCVMGPSFWCKSPEAAEMCNALEHCQRLVWKKPVS) enclose the Saposin A-type 2 domain.

The protein localises to the secreted. In terms of biological role, may activate the lysosomal degradation of sphingolipids. This Mus musculus (Mouse) protein is Proactivator polypeptide-like 1 (Psapl1).